A 224-amino-acid polypeptide reads, in one-letter code: Cytidylate kinase (224 aa).

10-18 (GPASAGKST) is a binding site for ATP.

Belongs to the cytidylate kinase family. Type 1 subfamily.

Its subcellular location is the cytoplasm. The enzyme catalyses CMP + ATP = CDP + ADP. The catalysed reaction is dCMP + ATP = dCDP + ADP. The sequence is that of Cytidylate kinase from Leuconostoc mesenteroides subsp. mesenteroides (strain ATCC 8293 / DSM 20343 / BCRC 11652 / CCM 1803 / JCM 6124 / NCDO 523 / NBRC 100496 / NCIMB 8023 / NCTC 12954 / NRRL B-1118 / 37Y).